A 501-amino-acid polypeptide reads, in one-letter code: Glycerol kinase (501 aa).

ADP is bound at residue Thr-16. ATP contacts are provided by Thr-16, Thr-17, and Ser-18. Thr-16 serves as a coordination point for sn-glycerol 3-phosphate. Residue Arg-20 participates in ADP binding. Sn-glycerol 3-phosphate-binding residues include Arg-84, Glu-85, Tyr-135, and Asp-242. Glycerol-binding residues include Arg-84, Glu-85, Tyr-135, Asp-242, and Gln-243. ADP contacts are provided by Thr-264 and Gly-307. The ATP site is built by Thr-264, Gly-307, Gln-311, and Gly-408. ADP is bound at residue Gly-408.

This sequence belongs to the FGGY kinase family.

The enzyme catalyses glycerol + ATP = sn-glycerol 3-phosphate + ADP + H(+). It participates in polyol metabolism; glycerol degradation via glycerol kinase pathway; sn-glycerol 3-phosphate from glycerol: step 1/1. Key enzyme in the regulation of glycerol uptake and metabolism. Catalyzes the phosphorylation of glycerol to yield sn-glycerol 3-phosphate. The sequence is that of Glycerol kinase from Saccharolobus islandicus (strain M.14.25 / Kamchatka #1) (Sulfolobus islandicus).